The sequence spans 62 residues: uncharacterized protein (62 aa).

This is an uncharacterized protein from Archaeoglobus fulgidus (strain ATCC 49558 / DSM 4304 / JCM 9628 / NBRC 100126 / VC-16).